We begin with the raw amino-acid sequence, 261 residues long: Cytochrome c oxidase subunit 3 (261 aa).

Residues 1–15 lie on the Mitochondrial matrix side of the membrane; it reads MTHQTHAYHMVNPSP. Residues 16–34 traverse the membrane as a helical segment; the sequence is WPLTGALSALLMTSGLIMW. Over 35–40 the chain is Mitochondrial intermembrane; the sequence is FHFNSM. A helical transmembrane segment spans residues 41-66; the sequence is YLLMLGLTTNTLTMYQWWRDIVREST. Residues 67-72 lie on the Mitochondrial matrix side of the membrane; the sequence is FQGHHT. A helical transmembrane segment spans residues 73–105; that stretch reads PIVQKGLRYGMILFIVSEVFFFAGFFWAFYHSS. The Mitochondrial intermembrane portion of the chain corresponds to 106–128; it reads LAPTPELGGCWPPTGITPLNPME. A helical transmembrane segment spans residues 129-152; it reads VPLLNTSVLLASGVSITWAHHSLM. Topologically, residues 153–155 are mitochondrial matrix; sequence EGN. A helical membrane pass occupies residues 156 to 183; that stretch reads RKHMLQALFITISLGIYFTLLQASEYYE. At 184–190 the chain is on the mitochondrial intermembrane side; the sequence is TPFTISD. A helical membrane pass occupies residues 191 to 223; it reads GIYGSTFFMATGFHGLHVIIGSTFLIVCFVRQL. Residues 224–232 lie on the Mitochondrial matrix side of the membrane; that stretch reads KFHFTSNHH. The helical transmembrane segment at 233–256 threads the bilayer; the sequence is FGFEAAAWYWHFVDVVWLFLYVSI. The Mitochondrial intermembrane portion of the chain corresponds to 257–261; that stretch reads YWWGS.

Belongs to the cytochrome c oxidase subunit 3 family. In terms of assembly, component of the cytochrome c oxidase (complex IV, CIV), a multisubunit enzyme composed of 14 subunits. The complex is composed of a catalytic core of 3 subunits MT-CO1, MT-CO2 and MT-CO3, encoded in the mitochondrial DNA, and 11 supernumerary subunits COX4I, COX5A, COX5B, COX6A, COX6B, COX6C, COX7A, COX7B, COX7C, COX8 and NDUFA4, which are encoded in the nuclear genome. The complex exists as a monomer or a dimer and forms supercomplexes (SCs) in the inner mitochondrial membrane with NADH-ubiquinone oxidoreductase (complex I, CI) and ubiquinol-cytochrome c oxidoreductase (cytochrome b-c1 complex, complex III, CIII), resulting in different assemblies (supercomplex SCI(1)III(2)IV(1) and megacomplex MCI(2)III(2)IV(2)).

The protein resides in the mitochondrion inner membrane. The enzyme catalyses 4 Fe(II)-[cytochrome c] + O2 + 8 H(+)(in) = 4 Fe(III)-[cytochrome c] + 2 H2O + 4 H(+)(out). Its function is as follows. Component of the cytochrome c oxidase, the last enzyme in the mitochondrial electron transport chain which drives oxidative phosphorylation. The respiratory chain contains 3 multisubunit complexes succinate dehydrogenase (complex II, CII), ubiquinol-cytochrome c oxidoreductase (cytochrome b-c1 complex, complex III, CIII) and cytochrome c oxidase (complex IV, CIV), that cooperate to transfer electrons derived from NADH and succinate to molecular oxygen, creating an electrochemical gradient over the inner membrane that drives transmembrane transport and the ATP synthase. Cytochrome c oxidase is the component of the respiratory chain that catalyzes the reduction of oxygen to water. Electrons originating from reduced cytochrome c in the intermembrane space (IMS) are transferred via the dinuclear copper A center (CU(A)) of subunit 2 and heme A of subunit 1 to the active site in subunit 1, a binuclear center (BNC) formed by heme A3 and copper B (CU(B)). The BNC reduces molecular oxygen to 2 water molecules using 4 electrons from cytochrome c in the IMS and 4 protons from the mitochondrial matrix. This Phoca vitulina (Harbor seal) protein is Cytochrome c oxidase subunit 3 (MT-CO3).